We begin with the raw amino-acid sequence, 72 residues long: Translation initiation factor IF-1 (72 aa).

One can recognise an S1-like domain in the interval M1 to R72.

The protein belongs to the IF-1 family. As to quaternary structure, component of the 30S ribosomal translation pre-initiation complex which assembles on the 30S ribosome in the order IF-2 and IF-3, IF-1 and N-formylmethionyl-tRNA(fMet); mRNA recruitment can occur at any time during PIC assembly.

Its subcellular location is the cytoplasm. In terms of biological role, one of the essential components for the initiation of protein synthesis. Stabilizes the binding of IF-2 and IF-3 on the 30S subunit to which N-formylmethionyl-tRNA(fMet) subsequently binds. Helps modulate mRNA selection, yielding the 30S pre-initiation complex (PIC). Upon addition of the 50S ribosomal subunit IF-1, IF-2 and IF-3 are released leaving the mature 70S translation initiation complex. The sequence is that of Translation initiation factor IF-1 from Treponema denticola (strain ATCC 35405 / DSM 14222 / CIP 103919 / JCM 8153 / KCTC 15104).